The sequence spans 500 residues: Oryzalexin D synthase (500 aa).

The chain crosses the membrane as a helical span at residues 4 to 24 (SQMWLLWGALSVALFFYFSTL). Residue C442 participates in heme binding.

It belongs to the cytochrome P450 family. The cofactor is heme.

It localises to the membrane. It catalyses the reaction ent-cassa-12,15-diene + reduced [NADPH--hemoprotein reductase] + O2 = ent-11beta-hydroxycassa-12,15-diene + oxidized [NADPH--hemoprotein reductase] + H2O + H(+). The catalysed reaction is ent-sandaracopimaradien-3beta-ol + reduced [NADPH--hemoprotein reductase] + O2 = oryzalexin D + oxidized [NADPH--hemoprotein reductase] + H2O + H(+). Its function is as follows. Enzyme of the diterpenoid metabolism involved in the biosynthesis of both phytocassane and the oryzalexin class of phytoalexins. Can hydroxylate syn-pimaradiene, ent-pimaradiene, ent-sandaracopimaradiene, ent-isokaurene, ent-kaurene, and ent-cassadiene, but no activity with syn-stemodene, syn-stemarene, syn-labdatriene, C11-alpha-hydroxy-ent-cassadiene or syn-pimadien-19-oic acid as substrates. Hydroxylates 3-alpha-hydroxy-ent-sandaracopimaradiene at C-7-beta, resulting in a 3-alpha,7-beta-diol corresponding to oryzalexins D. This is Oryzalexin D synthase from Oryza sativa subsp. japonica (Rice).